Consider the following 254-residue polypeptide: Probable membrane transporter protein YjnA (254 aa).

The next 6 helical transmembrane spans lie at 5-25 (IILMGLFVGALVGLTGVGGAA), 75-95 (AIGSIPSASLAIGILHLFPAF), 105-125 (HALGYVLTLVAISIIVRLFLD), 143-163 (ALTILIGVVFGFIVGLTSIGS), 187-207 (IAHAFLLVTAAGILNASFGSV), and 209-229 (YMLAANLLLGSIPGVLIGSHL).

The protein belongs to the 4-toluene sulfonate uptake permease (TSUP) (TC 2.A.102) family.

It is found in the cell membrane. This chain is Probable membrane transporter protein YjnA (yjnA), found in Bacillus subtilis (strain 168).